The primary structure comprises 715 residues: Nucleolar complex protein 2 homolog (715 aa).

Disordered regions lie at residues 17–71, 85–132, and 638–715; these read SKRI…HKLD, FLQQ…DKTK, and ERSA…SDED. Over residues 89 to 128 the composition is skewed to acidic residues; that stretch reads EDADLLNMEDDGDDDEDDDEDDEDEEEEESDDDEDDEEDD. Positions 638–660 are enriched in basic and acidic residues; that stretch reads ERSAVENSKKDDKKKKKEEEAAA.

This sequence belongs to the NOC2 family.

The protein resides in the nucleus. Functionally, required for normal somatic gonad development and for regulation of germline development and proliferation. This chain is Nucleolar complex protein 2 homolog (pro-2), found in Caenorhabditis elegans.